Reading from the N-terminus, the 396-residue chain is Elongation factor Tu (396 aa).

The region spanning 10–206 (KPHVNVGTIG…ALDSYIPEPE (197 aa)) is the tr-type G domain. Residues 19–26 (GHVDHGKT) form a G1 region. 19–26 (GHVDHGKT) is a binding site for GTP. T26 contacts Mg(2+). Residues 60-64 (GITIN) form a G2 region. The segment at 81–84 (DCPG) is G3. GTP is bound by residues 81 to 85 (DCPGH) and 136 to 139 (NKCD). The interval 136–139 (NKCD) is G4. The interval 174-176 (SAL) is G5.

Belongs to the TRAFAC class translation factor GTPase superfamily. Classic translation factor GTPase family. EF-Tu/EF-1A subfamily. Monomer.

Its subcellular location is the cytoplasm. It catalyses the reaction GTP + H2O = GDP + phosphate + H(+). Its function is as follows. GTP hydrolase that promotes the GTP-dependent binding of aminoacyl-tRNA to the A-site of ribosomes during protein biosynthesis. The chain is Elongation factor Tu from Acinetobacter baumannii (strain ATCC 17978 / DSM 105126 / CIP 53.77 / LMG 1025 / NCDC KC755 / 5377).